Consider the following 613-residue polypeptide: Probable indole-3-acetic acid-amido synthetase GH3.12 (613 aa).

It belongs to the IAA-amido conjugating enzyme family. In terms of tissue distribution, expressed in roots.

May catalyze the synthesis of indole-3-acetic acid (IAA)-amino acid conjugates, providing a mechanism for the plant to cope with the presence of excess auxin. The chain is Probable indole-3-acetic acid-amido synthetase GH3.12 (GH3.12) from Oryza sativa subsp. japonica (Rice).